Here is a 427-residue protein sequence, read N- to C-terminus: Dihydrofolate synthetase (427 aa).

34–37 (GKGS) contributes to the ATP binding site. Mg(2+) is bound by residues Glu123 and His153. Residues Arg275 and Asp296 each contribute to the ATP site.

It belongs to the folylpolyglutamate synthase family.

The protein resides in the cytoplasm. It catalyses the reaction 7,8-dihydropteroate + L-glutamate + ATP = 7,8-dihydrofolate + ADP + phosphate + H(+). It participates in cofactor biosynthesis; tetrahydrofolylpolyglutamate biosynthesis. Functionally, glutamate-adding enzyme which catalyzes the binding of the first glutamyl side chain to dihydropteroate. Leads to the de nove synthesis of tetrahydrofolate. The polypeptide is Dihydrofolate synthetase (FOL3) (Saccharomyces cerevisiae (strain ATCC 204508 / S288c) (Baker's yeast)).